The sequence spans 572 residues: Frizzled-7 (572 aa).

A signal peptide spans 1–32 (MRGPGTAASHSPLGLCALVLALLGALPTDTRA). The Extracellular portion of the chain corresponds to 33-254 (QPYHGEKGIS…EEERRFARLW (222 aa)). Positions 44–163 (PDHGFCQPIS…HGAGEICVGQ (120 aa)) constitute an FZ domain. 5 cysteine pairs are disulfide-bonded: C49-C110, C57-C103, C94-C131, C120-C160, and C124-C148. N63 carries N-linked (GlcNAc...) asparagine glycosylation. An N-linked (GlcNAc...) asparagine glycan is attached at N164. The chain crosses the membrane as a helical span at residues 255–275 (VGVWSVLCCASTLFTVLTYLV). At 276 to 286 (DMRRFSYPERP) the chain is on the cytoplasmic side. Residues 287–307 (IIFLSGCYFMVAVAHVAGFLL) form a helical membrane-spanning segment. The Extracellular segment spans residues 308–334 (EDRAVCVERFSDDGYRTVAQGTKKEGC). The helical transmembrane segment at 335–355 (TILFMVLYFFGMASSIWWVIL) threads the bilayer. The Cytoplasmic portion of the chain corresponds to 356-377 (SLTWFLAAGMKWGHEAIEANSQ). The chain crosses the membrane as a helical span at residues 378–398 (YFHLAAWAVPAVKTITILAMG). Topologically, residues 399–421 (QVDGDLLSGVCYVGLSSVDALRG) are extracellular. Residues 422–442 (FVLAPLFVYLFIGTSFLLAGF) form a helical membrane-spanning segment. Residues 443–468 (VSLFRIRTIMKHDGTKTEKLEKLMVR) lie on the Cytoplasmic side of the membrane. A helical transmembrane segment spans residues 469 to 489 (IGVFSVLYTVPATIVLACYFY). Over 490 to 526 (EQAFREHWERTWLLQTCKSYAVPCPPGHFSPMSPDFT) the chain is Extracellular. The chain crosses the membrane as a helical span at residues 527-547 (VFMIKYLMTMIVGITTGFWIW). Topologically, residues 548–572 (SGKTLQSWRRFYHRLSHSSKGETAV) are cytoplasmic. The Lys-Thr-X-X-X-Trp motif, mediates interaction with the PDZ domain of Dvl family members motif lies at 550–555 (KTLQSW). Positions 570 to 572 (TAV) match the PDZ-binding motif.

This sequence belongs to the G-protein coupled receptor Fz/Smo family. Interacts with MAGI3. Interacts with DVL1. Interacts with CCDC88C/DAPLE; the interaction displaces DVL1 from FZD7, leading to inhibition of canonical Wnt signaling and triggering of non-canonical Wnt responses. Interacts with MYOC. Binds to SDCBP; this interaction is increased by inositol trisphosphate (IP3). Interacts with glypican GPC3. Ubiquitinated by ZNRF3, leading to its degradation by the proteasome.

It is found in the cell membrane. The protein resides in the endosome membrane. Its function is as follows. Receptor for Wnt proteins. Most frizzled receptors are coupled to the beta-catenin canonical signaling pathway, which leads to the activation of disheveled proteins, inhibition of GSK-3 kinase, nuclear accumulation of beta-catenin and activation of Wnt target genes. A second signaling pathway involving PKC and calcium fluxes has been seen for some family members, but it is not yet clear if it represents a distinct pathway or if it can be integrated in the canonical pathway, as PKC seems to be required for Wnt-mediated inactivation of GSK-3 kinase. Both pathways seem to involve interactions with G-proteins. Activation by WNT8 induces expression of beta-catenin target genes. Following ligand activation, binds to CCDC88C/DAPLE which displaces DVL1 from FZD7 and leads to inhibition of canonical Wnt signaling, activation of G-proteins by CCDC88C and triggering of non-canonical Wnt responses. May be involved in transduction and intercellular transmission of polarity information during tissue morphogenesis and/or in differentiated tissues. This is Frizzled-7 (Fzd7) from Mus musculus (Mouse).